A 189-amino-acid chain; its full sequence is Cytidylate kinase (189 aa).

7–15 (GPPGSGKTS) is a binding site for ATP.

This sequence belongs to the cytidylate kinase family. Type 2 subfamily.

The protein resides in the cytoplasm. It catalyses the reaction CMP + ATP = CDP + ADP. The enzyme catalyses dCMP + ATP = dCDP + ADP. This chain is Cytidylate kinase, found in Saccharolobus islandicus (strain L.S.2.15 / Lassen #1) (Sulfolobus islandicus).